The sequence spans 1019 residues: Mediator of replication checkpoint protein 1 (1019 aa).

6 disordered regions span residues 1–33 (MASL…LDTP), 105–143 (QGGK…DRNS), 166–202 (NSAT…SDRK), 261–290 (EEEA…IVNS), 443–683 (IQGE…SKTF), and 965–1019 (TQRP…SDFD). Acidic residues predominate over residues 17 to 30 (SDEASINDDQEDIL). The span at 177-191 (LDSESADDSDLADES) shows a compositional bias: acidic residues. Basic and acidic residues-rich tracts occupy residues 192–202 (ELSKKYTSDRK), 271–281 (NVEKEEPKPSV), and 454–468 (LERA…RQLE). Acidic residues predominate over residues 476–486 (DEGELNDEEEV). A compositionally biased stretch (polar residues) spans 487-503 (ISSSNTPSTKAKTTNKV). The segment covering 556 to 580 (MIRDSFDRLSSESIKDSQKTEELHD) has biased composition (basic and acidic residues). 2 stretches are compositionally biased toward polar residues: residues 590–607 (QSTS…SQLT) and 630–658 (NTSS…IDSV). The residue at position 604 (Ser604) is a Phosphoserine. At Thr645 the chain carries Phosphothreonine. A compositionally biased stretch (basic and acidic residues) spans 671–681 (EERRESRRDSK).

As to quaternary structure, interacts with cds1. Post-translationally, phosphorylated by rad3 and tel1.

It localises to the nucleus. Its function is as follows. Component of the replisome and is required for rad3-dependent activation of the checkpoint kinase cds1 in response to replication fork arrest. Phosphorylation allows it to mediate the activation of cds1. The chain is Mediator of replication checkpoint protein 1 (mrc1) from Schizosaccharomyces pombe (strain 972 / ATCC 24843) (Fission yeast).